A 150-amino-acid polypeptide reads, in one-letter code: Phosphoribosyl-AMP cyclohydrolase (150 aa).

D93 serves as a coordination point for Mg(2+). Residue C94 coordinates Zn(2+). The Mg(2+) site is built by D95 and D97. Positions 112 and 119 each coordinate Zn(2+).

It belongs to the PRA-CH family. Homodimer. Mg(2+) is required as a cofactor. The cofactor is Zn(2+).

Its subcellular location is the cytoplasm. The enzyme catalyses 1-(5-phospho-beta-D-ribosyl)-5'-AMP + H2O = 1-(5-phospho-beta-D-ribosyl)-5-[(5-phospho-beta-D-ribosylamino)methylideneamino]imidazole-4-carboxamide. It participates in amino-acid biosynthesis; L-histidine biosynthesis; L-histidine from 5-phospho-alpha-D-ribose 1-diphosphate: step 3/9. Functionally, catalyzes the hydrolysis of the adenine ring of phosphoribosyl-AMP. The protein is Phosphoribosyl-AMP cyclohydrolase of Rhizobium leguminosarum bv. trifolii (strain WSM2304).